The sequence spans 554 residues: 3-(3-hydroxy-phenyl)propionate/3-hydroxycinnamic acid hydroxylase (554 aa).

Residues 17 to 46 (QVAI…VVEK) and 285 to 295 (FRIDRVLLAGD) each bind FAD.

This sequence belongs to the PheA/TfdB FAD monooxygenase family. FAD is required as a cofactor.

The catalysed reaction is 3-(3-hydroxyphenyl)propanoate + NADH + O2 + H(+) = 3-(2,3-dihydroxyphenyl)propanoate + NAD(+) + H2O. The enzyme catalyses (2E)-3-(3-hydroxyphenyl)prop-2-enoate + NADH + O2 + H(+) = (2E)-3-(2,3-dihydroxyphenyl)prop-2-enoate + NAD(+) + H2O. Its pathway is aromatic compound metabolism; 3-phenylpropanoate degradation. Catalyzes the insertion of one atom of molecular oxygen into position 2 of the phenyl ring of 3-(3-hydroxyphenyl)propionate (3-HPP) and hydroxycinnamic acid (3HCI). This Escherichia coli O81 (strain ED1a) protein is 3-(3-hydroxy-phenyl)propionate/3-hydroxycinnamic acid hydroxylase.